The primary structure comprises 688 residues: Transcription factor GTE9 (688 aa).

Residues 1-36 (MTERNGGFPGDYCFEAPGGDYDEGSDSPRVSEGSNC) are disordered. The Bromo domain maps to 132-238 (TAVMLLMKQC…KFFEVRWKTL (107 aa)). An NET domain is found at 280-361 (ENVVDPAKRV…EHLREIQNKK (82 aa)). A disordered region spans residues 423-505 (GNSLGSVSGD…AQNEKQLPPE (83 aa)). Position 478 is a phosphoserine (serine 478). Polar residues predominate over residues 491-500 (QDGNSAQNEK). The interval 505 to 688 (EKSYRAAILK…EIDIEEGEID (184 aa)) is transcription activation domain. A coiled-coil region spans residues 534–613 (TRDPEKLQRE…QSVELNENAK (80 aa)). A disordered region spans residues 660-688 (FMKQDEDEEEADPLTSPAPEIDIEEGEID).

As to quaternary structure, interacts with BT1.

It localises to the nucleus. This chain is Transcription factor GTE9 (GTE9), found in Arabidopsis thaliana (Mouse-ear cress).